A 104-amino-acid polypeptide reads, in one-letter code: Large ribosomal subunit protein bL21 (104 aa).

This sequence belongs to the bacterial ribosomal protein bL21 family. Part of the 50S ribosomal subunit. Contacts protein L20.

Its function is as follows. This protein binds to 23S rRNA in the presence of protein L20. The chain is Large ribosomal subunit protein bL21 from Streptococcus uberis (strain ATCC BAA-854 / 0140J).